A 276-amino-acid polypeptide reads, in one-letter code: Proteasome subunit beta type-8 (276 aa).

Positions 1-72 (MALLEVCGAP…KNIRKEMVHG (72 aa)) are cleaved as a propeptide — removed in mature form. Thr-73 functions as the Nucleophile in the catalytic mechanism.

Belongs to the peptidase T1B family. The 26S proteasome consists of a 20S proteasome core and two 19S regulatory subunits. The 20S proteasome core is composed of 28 subunits that are arranged in four stacked rings, resulting in a barrel-shaped structure. The two end rings are each formed by seven alpha subunits, and the two central rings are each formed by seven beta subunits. The catalytic chamber with the active sites is on the inside of the barrel. Component of the immunoproteasome, where it displaces the equivalent housekeeping subunit PSMB5. Component of the spermatoproteasome, a form of the proteasome specifically found in testis. Directly interacts with POMP. Autocleaved. The resulting N-terminal Thr residue of the mature subunit is responsible for the nucleophile proteolytic activity.

Its subcellular location is the cytoplasm. The protein resides in the nucleus. The enzyme catalyses Cleavage of peptide bonds with very broad specificity.. Functionally, the proteasome is a multicatalytic proteinase complex which is characterized by its ability to cleave peptides with Arg, Phe, Tyr, Leu, and Glu adjacent to the leaving group at neutral or slightly basic pH. The proteasome has an ATP-dependent proteolytic activity. This subunit is involved in antigen processing to generate class I binding peptides. May participate in the generation of spliced peptides resulting from the ligation of two separate proteasomal cleavage products that are not contiguous in the parental protein. Required for adipocyte differentiation. The sequence is that of Proteasome subunit beta type-8 (PSMB8) from Canis lupus familiaris (Dog).